The chain runs to 375 residues: Queuine tRNA-ribosyltransferase (375 aa).

Aspartate 89 acts as the Proton acceptor in catalysis. Substrate is bound by residues 89–93, aspartate 143, glutamine 187, and glycine 214; that span reads DSGGF. The interval 245 to 251 is RNA binding; the sequence is GVGKPED. Residue aspartate 264 is the Nucleophile of the active site. The interval 269–273 is RNA binding; important for wobble base 34 recognition; the sequence is TRNAR. 4 residues coordinate Zn(2+): cysteine 302, cysteine 304, cysteine 307, and histidine 333.

The protein belongs to the queuine tRNA-ribosyltransferase family. As to quaternary structure, homodimer. Within each dimer, one monomer is responsible for RNA recognition and catalysis, while the other monomer binds to the replacement base PreQ1. Zn(2+) is required as a cofactor.

The catalysed reaction is 7-aminomethyl-7-carbaguanine + guanosine(34) in tRNA = 7-aminomethyl-7-carbaguanosine(34) in tRNA + guanine. Its pathway is tRNA modification; tRNA-queuosine biosynthesis. In terms of biological role, catalyzes the base-exchange of a guanine (G) residue with the queuine precursor 7-aminomethyl-7-deazaguanine (PreQ1) at position 34 (anticodon wobble position) in tRNAs with GU(N) anticodons (tRNA-Asp, -Asn, -His and -Tyr). Catalysis occurs through a double-displacement mechanism. The nucleophile active site attacks the C1' of nucleotide 34 to detach the guanine base from the RNA, forming a covalent enzyme-RNA intermediate. The proton acceptor active site deprotonates the incoming PreQ1, allowing a nucleophilic attack on the C1' of the ribose to form the product. After dissociation, two additional enzymatic reactions on the tRNA convert PreQ1 to queuine (Q), resulting in the hypermodified nucleoside queuosine (7-(((4,5-cis-dihydroxy-2-cyclopenten-1-yl)amino)methyl)-7-deazaguanosine). The protein is Queuine tRNA-ribosyltransferase of Salmonella arizonae (strain ATCC BAA-731 / CDC346-86 / RSK2980).